Reading from the N-terminus, the 598-residue chain is Elongation factor 4 (598 aa).

In terms of domain architecture, tr-type G spans 2–184 (DNVRNFAIIA…AIITKLPAPQ (183 aa)). Residues 14-19 (DHGKST) and 131-134 (NKVD) contribute to the GTP site.

It belongs to the TRAFAC class translation factor GTPase superfamily. Classic translation factor GTPase family. LepA subfamily.

It is found in the cell membrane. The catalysed reaction is GTP + H2O = GDP + phosphate + H(+). Required for accurate and efficient protein synthesis under certain stress conditions. May act as a fidelity factor of the translation reaction, by catalyzing a one-codon backward translocation of tRNAs on improperly translocated ribosomes. Back-translocation proceeds from a post-translocation (POST) complex to a pre-translocation (PRE) complex, thus giving elongation factor G a second chance to translocate the tRNAs correctly. Binds to ribosomes in a GTP-dependent manner. The sequence is that of Elongation factor 4 from Wolbachia sp. subsp. Brugia malayi (strain TRS).